The primary structure comprises 171 residues: UPF0312 protein SAOUHSC_03022 (171 aa).

Belongs to the UPF0312 family.

The chain is UPF0312 protein SAOUHSC_03022 from Staphylococcus aureus (strain NCTC 8325 / PS 47).